We begin with the raw amino-acid sequence, 985 residues long: Ankyrin repeat domain-containing protein 24 (985 aa).

ANK repeat units follow at residues 52–81 (EGKS…DVMS), 85–114 (AGYN…VVDI), 118–147 (SGWT…HMNP), 151–180 (SGAT…ATND), and 184–213 (QGRT…QLSI). Disordered regions lie at residues 243–293 (RSSP…DRDA), 311–360 (IRGL…LGRE), 386–412 (QDEE…SAEE), 476–503 (YTEA…TAYQ), and 594–614 (DNAE…NPGM). The stretch at 291 to 488 (RDAYEEIVRL…AMHSQQQQQE (198 aa)) forms a coiled coil. Basic and acidic residues-rich tracts occupy residues 311-326 (IRGL…KEPL) and 349-360 (EKQEEKESLGRE).

Homodimer. Interacts (via C-terminal domain) with TRIOBP (via C-terminal domain) isoform 4; recruits TRIOBP isoform 4 to stereocilia rootlets. In terms of tissue distribution, expressed in vestibular hair bundles.

It is found in the cell membrane. It localises to the cell projection. The protein localises to the stereocilium. Component of the stereocilia rootlet in hair cells of inner ear. Bridges the apical plasma membrane with the lower rootlet and maintains normal distribution of TRIOBP, thereby reinforcing stereocilia insertion points and organizing rootlets for hearing with long-term resilience. This chain is Ankyrin repeat domain-containing protein 24 (Ankrd24), found in Mus musculus (Mouse).